Consider the following 333-residue polypeptide: Fructose-1,6-bisphosphatase class 1 1 (333 aa).

Positions 81, 100, 102, and 103 each coordinate Mg(2+). Substrate contacts are provided by residues 103 to 106 (DGSS) and Asn191. Mg(2+) is bound at residue Glu263.

It belongs to the FBPase class 1 family. Homotetramer. Mg(2+) serves as cofactor.

The protein resides in the cytoplasm. It catalyses the reaction beta-D-fructose 1,6-bisphosphate + H2O = beta-D-fructose 6-phosphate + phosphate. It participates in carbohydrate biosynthesis; Calvin cycle. This Cereibacter sphaeroides (strain ATCC 17025 / ATH 2.4.3) (Rhodobacter sphaeroides) protein is Fructose-1,6-bisphosphatase class 1 1.